We begin with the raw amino-acid sequence, 557 residues long: Potassium-transporting ATPase potassium-binding subunit (557 aa).

Transmembrane regions (helical) follow at residues 5–25 (GFLL…PLGS), 63–83 (LSAI…MLLG), 132–152 (GLTV…FALI), 170–190 (LLRI…LFFI), 253–273 (FVQM…FGEV), 283–303 (LLWA…WAEV), 329–349 (VLVS…AVIA), 356–376 (ALGG…FGGV), 379–399 (GLYG…LMIG), 416–436 (LTAL…ALAM), 484–504 (LLAL…MAIA), and 526–546 (LFVG…FIPA).

The protein belongs to the KdpA family. As to quaternary structure, the system is composed of three essential subunits: KdpA, KdpB and KdpC.

The protein resides in the cell inner membrane. Part of the high-affinity ATP-driven potassium transport (or Kdp) system, which catalyzes the hydrolysis of ATP coupled with the electrogenic transport of potassium into the cytoplasm. This subunit binds the periplasmic potassium ions and delivers the ions to the membrane domain of KdpB through an intramembrane tunnel. The chain is Potassium-transporting ATPase potassium-binding subunit from Escherichia coli O6:K15:H31 (strain 536 / UPEC).